The sequence spans 300 residues: Putative lysophosphatidic acid:oleoyl-CoA acyltransferase (300 aa).

A helical transmembrane segment spans residues 32–52 (WILIVVVMILRVPLCIISVTL). An HXXXXD motif motif is present at residues 115–120 (HSSPLD).

The protein belongs to the 1-acyl-sn-glycerol-3-phosphate acyltransferase family.

The protein localises to the lipid droplet. It is found in the endoplasmic reticulum membrane. The protein resides in the golgi apparatus membrane. It catalyses the reaction a 1-acyl-sn-glycero-3-phosphate + an acyl-CoA = a 1,2-diacyl-sn-glycero-3-phosphate + CoA. Acyl-CoA-dependent lysophosphatidic acid acyltransferase with preference for oleoyl-CoA. Involved in triacylglyceride homeostasis and lipid droplet formation. Involved in vacuolar protein sorting. The chain is Putative lysophosphatidic acid:oleoyl-CoA acyltransferase (vps66) from Schizosaccharomyces pombe (strain 972 / ATCC 24843) (Fission yeast).